Consider the following 80-residue polypeptide: Exodeoxyribonuclease 7 small subunit (80 aa).

Belongs to the XseB family. In terms of assembly, heterooligomer composed of large and small subunits.

It is found in the cytoplasm. The enzyme catalyses Exonucleolytic cleavage in either 5'- to 3'- or 3'- to 5'-direction to yield nucleoside 5'-phosphates.. Bidirectionally degrades single-stranded DNA into large acid-insoluble oligonucleotides, which are then degraded further into small acid-soluble oligonucleotides. The chain is Exodeoxyribonuclease 7 small subunit from Phenylobacterium zucineum (strain HLK1).